Reading from the N-terminus, the 389-residue chain is Alanine racemase (389 aa).

Lys48 functions as the Proton acceptor; specific for D-alanine in the catalytic mechanism. Lys48 is modified (N6-(pyridoxal phosphate)lysine). Arg144 lines the substrate pocket. The Proton acceptor; specific for L-alanine role is filled by Tyr281. Met329 contacts substrate.

Belongs to the alanine racemase family. Pyridoxal 5'-phosphate serves as cofactor.

The enzyme catalyses L-alanine = D-alanine. It participates in amino-acid biosynthesis; D-alanine biosynthesis; D-alanine from L-alanine: step 1/1. Functionally, catalyzes the interconversion of L-alanine and D-alanine. May also act on other amino acids. The sequence is that of Alanine racemase (alr) from Leptospira interrogans serogroup Icterohaemorrhagiae serovar Lai (strain 56601).